The sequence spans 529 residues: tRNA-2-methylthio-N(6)-dimethylallyladenosine synthase (529 aa).

Residues 18-134 form the MTTase N-terminal domain; the sequence is RTYQVRTYGC…LPTLLERARH (117 aa). Positions 27, 63, 97, 171, 175, and 178 each coordinate [4Fe-4S] cluster. The Radical SAM core domain maps to 157 to 404; it reads RESAYAGWVS…IELQERISLE (248 aa). One can recognise a TRAM domain in the interval 407 to 486; that stretch reads QAQVGRTLEL…PHHLIADGAL (80 aa).

The protein belongs to the methylthiotransferase family. MiaB subfamily. In terms of assembly, monomer. [4Fe-4S] cluster serves as cofactor.

It is found in the cytoplasm. It carries out the reaction N(6)-dimethylallyladenosine(37) in tRNA + (sulfur carrier)-SH + AH2 + 2 S-adenosyl-L-methionine = 2-methylsulfanyl-N(6)-dimethylallyladenosine(37) in tRNA + (sulfur carrier)-H + 5'-deoxyadenosine + L-methionine + A + S-adenosyl-L-homocysteine + 2 H(+). In terms of biological role, catalyzes the methylthiolation of N6-(dimethylallyl)adenosine (i(6)A), leading to the formation of 2-methylthio-N6-(dimethylallyl)adenosine (ms(2)i(6)A) at position 37 in tRNAs that read codons beginning with uridine. The protein is tRNA-2-methylthio-N(6)-dimethylallyladenosine synthase of Mycobacterium sp. (strain KMS).